The following is a 441-amino-acid chain: Alpha-methylserine aldolase (441 aa).

Lys-256 is modified (N6-(pyridoxal phosphate)lysine).

Belongs to the SHMT family. Alpha-methylserine aldolase subfamily. Homodimer. Pyridoxal 5'-phosphate is required as a cofactor.

It catalyses the reaction 2-methyl-L-serine = formaldehyde + L-alanine. Its function is as follows. Catalyzes the reversible interconversion of alpha-methyl-L-serine to L-alanine and formaldehyde. The polypeptide is Alpha-methylserine aldolase (Variovorax paradoxus).